The primary structure comprises 80 residues: Penaeidin-3 (80 aa).

The signal sequence occupies residues 1 to 19; sequence MRLVVCLVYLVSFALVCQG. Position 20 is a pyrrolidone carboxylic acid (glutamine 20). 3 cysteine pairs are disulfide-bonded: cysteine 54/cysteine 67, cysteine 57/cysteine 74, and cysteine 68/cysteine 75.

The protein belongs to the penaeidin family. Post-translationally, the N-terminus forms pyrrolidone carboxylic acid. As to expression, strongly expressed in hemocytes, and to a lesser extent in heart, muscle, gills, intestine and eyestalk. Lowest expression in hepatopancreas.

The protein resides in the cytoplasmic granule. Its function is as follows. Antibacterial and antifungal activity. Presents chitin-binding activity. The protein is Penaeidin-3 of Penaeus indicus (Indian white prawn).